Consider the following 43-residue polypeptide: Protein PsbN (43 aa).

A helical transmembrane segment spans residues 5-27 (TLVAISISGLLVSFTGYALYTAF).

This sequence belongs to the PsbN family.

It localises to the plastid. The protein resides in the chloroplast thylakoid membrane. Functionally, may play a role in photosystem I and II biogenesis. The protein is Protein PsbN of Coelogyne cristata (Orchid).